Consider the following 3750-residue polypeptide: Cubilin homolog (3750 aa).

A signal peptide spans 1–28 (MEGAARSRLLLCWTLLAIITDTWPIAEG). Asn51 and Asn123 each carry an N-linked (GlcNAc...) asparagine glycan. The region spanning 154-190 (EANSCASGPCENGGTCYNTYTGFRCQCRSAFEGTKCE) is the EGF-like 1 domain. Intrachain disulfides connect Cys158–Cys169, Cys163–Cys178, Cys180–Cys189, Cys196–Cys212, Cys206–Cys221, and Cys223–Cys232. An EGF-like 2; calcium-binding domain is found at 192–233 (DVNECALYEGTDLGCQNGGQCQNHFGTYSCLCQPGWHGMHCT). The EGF-like 3; calcium-binding domain occupies 282–308 (DVDECSDSAAHKPCSTSCINLPGSFTC). The 29-residue stretch at 324 to 352 (DLDECQTNNGGCSLSPKVDCINTYGSYHC) folds into the EGF-like 4; calcium-binding domain. N-linked (GlcNAc...) asparagine glycosylation occurs at Asn424. EGF-like domains are found at residues 426–463 (TTTN…PICE) and 465–503 (QPSP…RLCE). 7 cysteine pairs are disulfide-bonded: Cys430–Cys441, Cys435–Cys451, Cys453–Cys462, Cys469–Cys480, Cys474–Cys491, Cys493–Cys502, and Cys509–Cys535. N-linked (GlcNAc...) asparagine glycosylation is present at Asn448. 13 consecutive CUB domains span residues 509 to 623 (CNGM…WNSM), 627 to 738 (CGGR…YSVE), 744 to 852 (CGGV…YRMA), 853 to 971 (CDYK…YRAL), 978 to 1095 (CGGV…YTFE), 1100 to 1212 (CGGH…WRIF), 1216 to 1331 (CGGS…YKAN), 1332 to 1434 (CIRN…QLDY), 1439 to 1550 (CMEE…YRTV), 1554 to 1670 (CGGK…FHES), 1671 to 1788 (CGQT…YMTM), 1792 to 1902 (CGSI…YNYE), and 1903 to 2001 (HHNE…WNRL). 2 N-linked (GlcNAc...) asparagine glycosylation sites follow: Asn542 and Asn548. Cys562 and Cys584 are oxidised to a cystine. Asn609 carries an N-linked (GlcNAc...) asparagine glycan. Disulfide bonds link Cys627/Cys654, Cys681/Cys701, Cys744/Cys770, Cys853/Cys879, Cys913/Cys933, and Cys978/Cys1004. Asn871 is a glycosylation site (N-linked (GlcNAc...) asparagine). Ca(2+)-binding residues include Glu1026, Asp1034, and Asp1080. Cys1031 and Cys1058 form a disulfide bridge. An intrachain disulfide couples Cys1100 to Cys1126. N-linked (GlcNAc...) asparagine glycosylation is present at Asn1119. Glu1148 contributes to the Ca(2+) binding site. An N-linked (GlcNAc...) asparagine glycan is attached at Asn1152. Cysteines 1153 and 1175 form a disulfide. Asp1156 and Asp1197 together coordinate Ca(2+). Cys1216 and Cys1242 form a disulfide bridge. Glu1264, Asp1272, and Asp1316 together coordinate Ca(2+). A disulfide bond links Cys1269 and Cys1292. An intrachain disulfide couples Cys1332 to Cys1360. N-linked (GlcNAc...) asparagine glycans are attached at residues Asn1335, Asn1359, Asn1413, and Asn1424. Cys1439 and Cys1465 are disulfide-bonded. Asn1491 is a glycosylation site (N-linked (GlcNAc...) asparagine). 7 cysteine pairs are disulfide-bonded: Cys1492–Cys1513, Cys1554–Cys1580, Cys1607–Cys1631, Cys1671–Cys1697, Cys1733–Cys1755, Cys1792–Cys1818, and Cys1845–Cys1866. Residue Asn1694 is glycosylated (N-linked (GlcNAc...) asparagine). N-linked (GlcNAc...) asparagine glycans are attached at residues Asn1908 and Asn2009. Cystine bridges form between Cys2019–Cys2048 and Cys2077–Cys2100. 5 CUB domains span residues 2019-2139 (CGNQ…VRTA), 2140-2256 (CGSE…FRFE), 2262-2383 (DSGR…LSVA), 2385-2512 (CGGS…YTSL), and 2516-2646 (CGET…MNEV). Asn2092, Asn2128, Asn2152, and Asn2231 each carry an N-linked (GlcNAc...) asparagine glycan. Cysteines 2140 and 2167 form a disulfide. Cysteines 2324 and 2346 form a disulfide. Asn2377 carries an N-linked (GlcNAc...) asparagine glycan. Cysteines 2385 and 2416 form a disulfide. Asn2442 is a glycosylation site (N-linked (GlcNAc...) asparagine). Disulfide bonds link Cys2445–Cys2474 and Cys2516–Cys2542. N-linked (GlcNAc...) asparagine glycosylation is found at Asn2655, Asn2671, Asn2682, and Asn2772. Intrachain disulfides connect Cys2761–Cys2790 and Cys2837–Cys2859. CUB domains follow at residues 2761–2895 (CGGV…IKYG), 2898–3010 (CGGK…FERN), 3011–3128 (CGGL…YTSR), 3130–3246 (CGGI…VRVM), 3249–3364 (CDEK…INAI), 3368–3512 (CGSS…VALN), 3522–3615 (LQGR…YLAS), and 3623–3736 (CGGQ…FAGV). Residues Asn2885 and Asn2889 are each glycosylated (N-linked (GlcNAc...) asparagine). 2 disulfide bridges follow: Cys2898–Cys2921 and Cys2949–Cys2973. 3 N-linked (GlcNAc...) asparagine glycosylation sites follow: Asn2960, Asn2965, and Asn2982. A disulfide bond links Cys3011 and Cys3039. N-linked (GlcNAc...) asparagine glycosylation is found at Asn3040 and Asn3074. Cystine bridges form between Cys3070/Cys3092 and Cys3130/Cys3157. Residue Asn3160 is glycosylated (N-linked (GlcNAc...) asparagine). Intrachain disulfides connect Cys3184/Cys3207, Cys3249/Cys3278, Cys3305/Cys3327, and Cys3368/Cys3402. Asn3256 carries N-linked (GlcNAc...) asparagine glycosylation. An N-linked (GlcNAc...) asparagine glycan is attached at Asn3427. An intrachain disulfide couples Cys3430 to Cys3475. N-linked (GlcNAc...) asparagine glycosylation is found at Asn3543, Asn3572, and Asn3645. Disulfide bonds link Cys3560-Cys3579, Cys3623-Cys3649, and Cys3676-Cys3699.

Specifically expressed in nephrocytes.

Its subcellular location is the cell membrane. Required in the nephrocyte for normal uptake of proteins and elimination of toxins, and for maintenance of endocytic trafficking structures. May function together with Amnionless. The chain is Cubilin homolog from Drosophila melanogaster (Fruit fly).